The following is a 156-amino-acid chain: Small ribosomal subunit protein uS7 (156 aa).

It belongs to the universal ribosomal protein uS7 family. Part of the 30S ribosomal subunit. Contacts proteins S9 and S11.

Its function is as follows. One of the primary rRNA binding proteins, it binds directly to 16S rRNA where it nucleates assembly of the head domain of the 30S subunit. Is located at the subunit interface close to the decoding center, probably blocks exit of the E-site tRNA. The chain is Small ribosomal subunit protein uS7 from Streptococcus pneumoniae (strain Taiwan19F-14).